We begin with the raw amino-acid sequence, 204 residues long: MDSKKAILMLSLLAMALISSVMSARDLTETSTDAKKEVVEKTNEVNDAKYGGGYNHGGGYNGGGYNHGGGYNHGGGGYHNGGGGYNHGGGGYNGGGGHGGHGGGGYNGGGGHGGHGGGGYNGGGGHGGHGGAESVAVQTEEKTNEVNDAKYGGGSNYNDGRGGYNHGGGGYNHGGGGHGGHGGHGGHGGHGGHGAVQTEDNTQN.

Tandem repeats lie at residues 54-59, 65-70, 71-76, 78-83, 85-90, 98-100, 101-103, 112-114, 115-117, 126-128, 129-131, 164-169, 171-176, 178-180, 181-183, 184-186, 187-189, and 190-192. The 7 X 6 AA repeats of Y-N-H-G-G-G stretch occupies residues 54–176; the sequence is YNHGGGYNGG…GGGGYNHGGG (123 aa). The tract at residues 98–192 is 11 X 3 AA repeats of H-G-G; the sequence is HGGHGGGGYN…GHGGHGGHGG (95 aa). Over residues 169–194 the composition is skewed to gly residues; the sequence is GGYNHGGGGHGGHGGHGGHGGHGGHG. A disordered region spans residues 169 to 204; that stretch reads GGYNHGGGGHGGHGGHGGHGGHGGHGAVQTEDNTQN.

Belongs to the GRP family.

May be involved in resistance of the plant to environmental stress. This is Cold and drought-regulated protein CORA (CORA) from Medicago sativa (Alfalfa).